We begin with the raw amino-acid sequence, 129 residues long: Small ribosomal subunit protein uS11 (129 aa).

Belongs to the universal ribosomal protein uS11 family. Part of the 30S ribosomal subunit. Interacts with proteins S7 and S18. Binds to IF-3.

Located on the platform of the 30S subunit, it bridges several disparate RNA helices of the 16S rRNA. Forms part of the Shine-Dalgarno cleft in the 70S ribosome. In Paracoccus denitrificans (strain Pd 1222), this protein is Small ribosomal subunit protein uS11.